A 78-amino-acid chain; its full sequence is DNA-directed RNA polymerase subunit omega (78 aa).

This sequence belongs to the RNA polymerase subunit omega family. In cyanobacteria the RNAP catalytic core is composed of 2 alpha, 1 beta, 1 beta', 1 gamma and 1 omega subunit. When a sigma factor is associated with the core the holoenzyme is formed, which can initiate transcription.

It catalyses the reaction RNA(n) + a ribonucleoside 5'-triphosphate = RNA(n+1) + diphosphate. In terms of biological role, promotes RNA polymerase assembly. Latches the N- and C-terminal regions of the beta' subunit thereby facilitating its interaction with the beta and alpha subunits. The chain is DNA-directed RNA polymerase subunit omega from Prochlorococcus marinus (strain AS9601).